The sequence spans 66 residues: Alpha-actitoxin-Ms11a-2 (66 aa).

The first 24 residues, 1–24 (MASKIFFVLAVFLVMSAVLPESFA), serve as a signal peptide directing secretion. Disulfide bonds link cysteine 26/cysteine 41, cysteine 33/cysteine 46, and cysteine 40/cysteine 61.

It localises to the secreted. The protein localises to the nematocyst. Its function is as follows. Alpha-toxins act on postsynaptic membranes, they bind to the nicotinic acetylcholine receptors (nAChR) and thus inhibit them. This toxin competes with alpha-bungarotoxin for binding to orthosteric sites on muscle-type T.carlifornicus (IC(50)=1080 nM) and human alpha-7/CHRNA7 nAChRs (IC(50)=14.13 uM). This is Alpha-actitoxin-Ms11a-2 from Metridium senile (Brown sea anemone).